Reading from the N-terminus, the 238-residue chain is uncharacterized protein (238 aa).

This is an uncharacterized protein from Frog virus 3 (isolate Goorha) (FV-3).